Here is a 287-residue protein sequence, read N- to C-terminus: 3-hydroxyanthranilate 3,4-dioxygenase (287 aa).

The tract at residues Met1–Asp163 is domain A (catalytic). Arg46 is an O2 binding site. His50, Glu56, and His94 together coordinate Fe cation. Glu56 serves as a coordination point for substrate. The substrate site is built by Arg98 and Glu108. The interval Pro164–Val180 is linker. The tract at residues Met181–Tyr287 is domain B.

The protein belongs to the 3-HAO family. As to quaternary structure, monomer. The cofactor is Fe(2+).

It localises to the cytoplasm. It is found in the cytosol. It carries out the reaction 3-hydroxyanthranilate + O2 = (2Z,4Z)-2-amino-3-carboxymuconate 6-semialdehyde. It participates in cofactor biosynthesis; NAD(+) biosynthesis; quinolinate from L-kynurenine: step 3/3. Its function is as follows. Catalyzes the oxidative ring opening of 3-hydroxyanthranilate to 2-amino-3-carboxymuconate semialdehyde, which spontaneously cyclizes to quinolinate. This is 3-hydroxyanthranilate 3,4-dioxygenase (haao) from Danio rerio (Zebrafish).